We begin with the raw amino-acid sequence, 267 residues long: 4-hydroxy-2-oxo-heptane-1,7-dioate aldolase (267 aa).

His45 acts as the Proton acceptor in catalysis. Gln147 serves as a coordination point for substrate. Glu149 lines the a divalent metal cation pocket. 2 residues coordinate substrate: Ala174 and Asp175. Asp175 is a binding site for a divalent metal cation.

Belongs to the HpcH/HpaI aldolase family. As to quaternary structure, homohexamer; trimer of dimers. It depends on a divalent metal cation as a cofactor.

It carries out the reaction 4-hydroxy-2-oxoheptanedioate = succinate semialdehyde + pyruvate. It participates in aromatic compound metabolism; 4-hydroxyphenylacetate degradation; pyruvate and succinate semialdehyde from 4-hydroxyphenylacetate: step 7/7. In terms of biological role, catalyzes the reversible retro-aldol cleavage of 4-hydroxy-2-ketoheptane-1,7-dioate (HKHD) to pyruvate and succinic semialdehyde. The chain is 4-hydroxy-2-oxo-heptane-1,7-dioate aldolase from Shigella flexneri.